The sequence spans 232 residues: Large ribosomal subunit protein uL1 (232 aa).

The protein belongs to the universal ribosomal protein uL1 family. As to quaternary structure, part of the 50S ribosomal subunit.

Binds directly to 23S rRNA. The L1 stalk is quite mobile in the ribosome, and is involved in E site tRNA release. In terms of biological role, protein L1 is also a translational repressor protein, it controls the translation of the L11 operon by binding to its mRNA. The polypeptide is Large ribosomal subunit protein uL1 (Thermosipho africanus (strain TCF52B)).